Here is a 265-residue protein sequence, read N- to C-terminus: Dimethylsulfide dehydrogenase subunit gamma (265 aa).

The first 25 residues, 1–25 (MPGFRFLLAATAAFLATSPALPLSA), serve as a signal peptide directing secretion. The heme b site is built by H81 and M147.

In terms of assembly, heterotrimer of alpha, beta and gamma subunits. Heme b is required as a cofactor.

It localises to the periplasm. May transfer electrons to the iron-sulfur centers of DdhB. The sequence is that of Dimethylsulfide dehydrogenase subunit gamma (ddhC) from Rhodovulum sulfidophilum (Rhodobacter sulfidophilus).